The chain runs to 595 residues: MSRVLSAVAWPYANGPRHIGHVAGFGVPSDVFSRYMRMAGHDVLMVSGSDEHGTPILIAADEAGLSPQELADRNHRIIAEDLASLGLTYDLYTRTTTRNHHAVVQELFLGVYENGYFVEQTTYGAISPSTGRTLPDRYIEGTCPICGYDGARGDQCDNCGNQLDPHDLIDPRSKINGETPEFIETQHFFLDLPALAEALGEWLDGREATGLWRPNVIRFSQNILKEIRPRAMTRDIDWGIAVPLDGWRENPTKRLYVWFDAVIGYLSASIEWARRLDEPDRWRDWWNDPDALSYYFMGKDNITFHSQIWPAELLAYSGKGAKGGTPRQYGELNLPTEVVSSEFLTMEGRKFSSSKRVVIYVRDLLSRYQPDAFRYFVAAAGPENQDSDFTWSEFVRRTNDELVAGWGNLVNRTANLIAKNFGEIPKAGELTAADQALLDSVASAFGVVGDLIGRHRQKQAIGEAMRAVAEVNKYVSDTEPWKIKDDPDRLGTILHVVAQCVADLNLILSPFLPFAANEVDRALGGSGEIAPMPRLEEVDDLDGGAPYPIITGEYSGFPAWERRPIVPGTPVSKPTPIFTKLDPSIVDEELARLES.

The short motif at 11–21 is the 'HIGH' region element; the sequence is PYANGPRHIGH. C143, C146, C156, and C159 together coordinate Zn(2+). Residues 350-354 carry the 'KMSKS' region motif; it reads KFSSS. S353 lines the ATP pocket.

This sequence belongs to the class-I aminoacyl-tRNA synthetase family. MetG type 1 subfamily. Monomer. The cofactor is Zn(2+).

It is found in the cytoplasm. The catalysed reaction is tRNA(Met) + L-methionine + ATP = L-methionyl-tRNA(Met) + AMP + diphosphate. In terms of biological role, is required not only for elongation of protein synthesis but also for the initiation of all mRNA translation through initiator tRNA(fMet) aminoacylation. This Nocardioides sp. (strain ATCC BAA-499 / JS614) protein is Methionine--tRNA ligase.